Here is a 51-residue protein sequence, read N- to C-terminus: Large ribosomal subunit protein bL33 (51 aa).

The segment at 1 to 23 (MREKIKLESSAGTGHFYTTTKNK) is disordered. Residues 10-20 (SAGTGHFYTTT) show a composition bias toward polar residues.

It belongs to the bacterial ribosomal protein bL33 family.

This chain is Large ribosomal subunit protein bL33, found in Nitrosomonas eutropha (strain DSM 101675 / C91 / Nm57).